We begin with the raw amino-acid sequence, 402 residues long: NADH-quinone oxidoreductase subunit D (402 aa).

The protein belongs to the complex I 49 kDa subunit family. NDH-1 is composed of 14 different subunits. Subunits NuoB, C, D, E, F, and G constitute the peripheral sector of the complex.

The protein localises to the cell inner membrane. The catalysed reaction is a quinone + NADH + 5 H(+)(in) = a quinol + NAD(+) + 4 H(+)(out). Its function is as follows. NDH-1 shuttles electrons from NADH, via FMN and iron-sulfur (Fe-S) centers, to quinones in the respiratory chain. The immediate electron acceptor for the enzyme in this species is believed to be ubiquinone. Couples the redox reaction to proton translocation (for every two electrons transferred, four hydrogen ions are translocated across the cytoplasmic membrane), and thus conserves the redox energy in a proton gradient. This is NADH-quinone oxidoreductase subunit D from Cereibacter sphaeroides (strain ATCC 17029 / ATH 2.4.9) (Rhodobacter sphaeroides).